The primary structure comprises 110 residues: Class I hydrophobin 2 (110 aa).

The first 17 residues, M1–A17, serve as a signal peptide directing secretion. 4 cysteine pairs are disulfide-bonded: C28/C89, C36/C83, C37/C71, and C90/C103. The N-linked (GlcNAc...) asparagine glycan is linked to N57.

The protein belongs to the fungal hydrophobin family. In terms of assembly, self-assembles to form functional amyloid fibrils called rodlets. Self-assembly into fibrillar rodlets occurs spontaneously at hydrophobic:hydrophilic interfaces and the rodlets further associate laterally to form amphipathic monolayers.

It is found in the secreted. The protein localises to the cell wall. Functionally, aerial growth, conidiation, and dispersal of filamentous fungi in the environment rely upon a capability of their secreting small amphipathic proteins called hydrophobins (HPBs) with low sequence identity. Class I can self-assemble into an outermost layer of rodlet bundles on aerial cell surfaces, conferring cellular hydrophobicity that supports fungal growth, development and dispersal; whereas Class II form highly ordered films at water-air interfaces through intermolecular interactions but contribute nothing to the rodlet structure. CoH2 is an asexual monokaryon-specific class I hydrophobin that is involved in aerial growth of mycelia. This is Class I hydrophobin 2 from Coprinopsis cinerea (Inky cap fungus).